The sequence spans 160 residues: MAPK regulated corepressor interacting protein 2 (160 aa).

Met-1 bears the N-acetylmethionine mark. The segment at 1-22 is disordered; the sequence is MYTITKGPSKLVAQRRTGPTQQ. The residue at position 35 (Arg-35) is an Omega-N-methylarginine. The segment at 43-64 is disordered; that stretch reads LPAHLQPSAQTQGPWPLASSGP. Ser-61 carries the post-translational modification Phosphoserine. Residue Arg-65 is modified to Omega-N-methylarginine. The residue at position 82 (Ser-82) is a Phosphoserine.

This sequence belongs to the MCRIP family. As to quaternary structure, interacts with DDX6. Interacts with MCRIP1.

The protein localises to the cytoplasm. It is found in the stress granule. It localises to the nucleus. In Mus musculus (Mouse), this protein is MAPK regulated corepressor interacting protein 2 (Mcrip2).